We begin with the raw amino-acid sequence, 574 residues long: Ankyrin repeat protein B18 (574 aa).

ANK repeat units follow at residues 56–87, 135–164, 167–213, 217–249, 253–285, and 327–356; these read TGYT…DVTI, IKSR…DPNF, DGYT…NLNA, CGNT…NFEI, HGLT…NVGE, and EGKT…DINA. Positions 541 to 574 constitute an F-box domain; sequence KCLLTLLPSEIIYEILYMLTIYDLYNISYPPTKV.

This chain is Ankyrin repeat protein B18, found in Variola virus (isolate Human/India/Ind3/1967) (VARV).